The sequence spans 456 residues: Chordin-like protein 1 (456 aa).

The first 28 residues, 1-28 (MRRKWRSEDFHFVFFGVLCLLLIDRGKL), serve as a signal peptide directing secretion. VWFC domains lie at 36–101 (TYCV…PRCP), 115–181 (KSCE…PVCR), and 262–327 (RVCV…KVCP). Asn120 is a glycosylation site (N-linked (GlcNAc...) asparagine). Residues 181 to 183 (RGD) carry the Cell attachment site motif. A glycan (N-linked (GlcNAc...) asparagine) is linked at Asn295.

As to expression, mainly expressed in the ventral retina.

Its subcellular location is the secreted. Functionally, seems to antagonize the function of BMP4 by binding to it and preventing its interaction with receptors. This is Chordin-like protein 1 (CHRDL1) from Gallus gallus (Chicken).